The chain runs to 400 residues: Elongation factor Tu (400 aa).

A tr-type G domain is found at 10–208; the sequence is KPHVNVGTIG…AMDNYIPDPQ (199 aa). Positions 19–26 are G1; the sequence is GHIDHGKS. 19–26 contributes to the GTP binding site; the sequence is GHIDHGKS. Mg(2+) is bound at residue Ser-26. A G2 region spans residues 60–64; that stretch reads GITIN. Residues 81 to 84 form a G3 region; that stretch reads DCPG. GTP is bound by residues 81–85 and 136–139; these read DCPGH and NKTD. Positions 136–139 are G4; the sequence is NKTD. The G5 stretch occupies residues 174-176; that stretch reads SAL.

The protein belongs to the TRAFAC class translation factor GTPase superfamily. Classic translation factor GTPase family. EF-Tu/EF-1A subfamily. In terms of assembly, monomer.

It localises to the cytoplasm. It carries out the reaction GTP + H2O = GDP + phosphate + H(+). GTP hydrolase that promotes the GTP-dependent binding of aminoacyl-tRNA to the A-site of ribosomes during protein biosynthesis. This is Elongation factor Tu from Thermotoga maritima (strain ATCC 43589 / DSM 3109 / JCM 10099 / NBRC 100826 / MSB8).